Reading from the N-terminus, the 146-residue chain is Transcriptional repressor NrdR (146 aa).

A zinc finger lies at 3-34; it reads CPFCQNPDTKVIDTRISDDGHSIRRRRVCPKC. Residues 46-136 enclose the ATP-cone domain; sequence LLVTKRSGGV…VYQNFAGLED (91 aa).

It belongs to the NrdR family. Requires Zn(2+) as cofactor.

Its function is as follows. Negatively regulates transcription of bacterial ribonucleotide reductase nrd genes and operons by binding to NrdR-boxes. This Bifidobacterium longum (strain NCC 2705) protein is Transcriptional repressor NrdR.